Here is a 1755-residue protein sequence, read N- to C-terminus: Transposon Ty1-LR3 Gag-Pol polyprotein (1755 aa).

Residues 1-16 (MESQQLSQHSHISHGS) show a composition bias toward low complexity. Disordered stretches follow at residues 1–93 (MESQ…MMTQ), 126–173 (PQSQ…RPPP), and 352–421 (GSRN…SKST). Composition is skewed to polar residues over residues 48–60 (TKANSQQTTTPAS) and 127–152 (QSQFPQYPSSVGTPLSTPSPESGNTF). Positions 153–165 (TDSSSADSDMTST) are enriched in low complexity. The tract at residues 299-401 (NNGIHINNKV…NSKSKTARAH (103 aa)) is RNA-binding. The span at 402–418 (NVSTSNNSPSTDNDSIS) shows a compositional bias: low complexity. Ser-416 carries the phosphoserine modification. Asp-461 serves as the catalytic For protease activity; shared with dimeric partner. An integrase-type zinc finger-like region spans residues 583–640 (NVHTSESTRKYPYPFIHRMLAHANAQTIRYSLKNNTITYFNESDVDWSSAIDYQCPDC). Residues 660–829 (NSYEPFQYLH…SQHAGLAGLD (170 aa)) form the Integrase catalytic domain. The Mg(2+) site is built by Asp-671 and Asp-736. Disordered stretches follow at residues 956–1087 (SKAV…ETEK), 1092–1111 (RSPSIDASPPENNSSHNIVP), and 1129–1172 (ADLP…SNAY). Low complexity predominate over residues 960–969 (SPTDSTPPST). A compositionally biased stretch (polar residues) spans 1005–1015 (STPQISNIEST). The segment covering 1038-1052 (ESSHASKSKDFRHSD) has biased composition (basic and acidic residues). 2 stretches are compositionally biased toward polar residues: residues 1053–1082 (SYSNNETNHTNVPISSTGGTNNKTVPQISD) and 1101–1111 (PENNSSHNIVP). The Bipartite nuclear localization signal motif lies at 1178–1212 (KKRSLEDNETEIKVSRDTWNTKNMRSLEPPRSKKR). The Reverse transcriptase Ty1/copia-type domain occupies 1338–1476 (NNYYITQLDI…DILGLEIKYQ (139 aa)). Mg(2+) contacts are provided by Asp-1346, Asp-1427, Asp-1428, Asp-1610, Glu-1652, and Asp-1685. The RNase H Ty1/copia-type domain maps to 1610–1752 (DASYGNQPYY…IKTFKLLTNK (143 aa)).

As to quaternary structure, the capsid protein forms a homotrimer, from which the VLPs are assembled. The protease is a homodimer, whose active site consists of two apposed aspartic acid residues. Post-translationally, initially, virus-like particles (VLPs) are composed of the structural unprocessed proteins Gag and Gag-Pol, and also contain the host initiator methionine tRNA (tRNA(i)-Met) which serves as a primer for minus-strand DNA synthesis, and a dimer of genomic Ty RNA. Processing of the polyproteins occurs within the particle and proceeds by an ordered pathway, called maturation. First, the protease (PR) is released by autocatalytic cleavage of the Gag-Pol polyprotein yielding capsid protein p45 and a Pol-p154 precursor protein. This cleavage is a prerequisite for subsequent processing of Pol-p154 at the remaining sites to release the mature structural and catalytic proteins. Maturation takes place prior to the RT reaction and is required to produce transposition-competent VLPs.

It localises to the cytoplasm. The protein resides in the nucleus. It catalyses the reaction DNA(n) + a 2'-deoxyribonucleoside 5'-triphosphate = DNA(n+1) + diphosphate. The enzyme catalyses Endonucleolytic cleavage to 5'-phosphomonoester.. Functionally, capsid protein (CA) is the structural component of the virus-like particle (VLP), forming the shell that encapsulates the retrotransposons dimeric RNA genome. The particles are assembled from trimer-clustered units and there are holes in the capsid shells that allow for the diffusion of macromolecules. CA also has nucleocapsid-like chaperone activity, promoting primer tRNA(i)-Met annealing to the multipartite primer-binding site (PBS), dimerization of Ty1 RNA and initiation of reverse transcription. In terms of biological role, the aspartyl protease (PR) mediates the proteolytic cleavages of the Gag and Gag-Pol polyproteins after assembly of the VLP. Its function is as follows. Reverse transcriptase/ribonuclease H (RT) is a multifunctional enzyme that catalyzes the conversion of the retro-elements RNA genome into dsDNA within the VLP. The enzyme displays a DNA polymerase activity that can copy either DNA or RNA templates, and a ribonuclease H (RNase H) activity that cleaves the RNA strand of RNA-DNA heteroduplexes during plus-strand synthesis and hydrolyzes RNA primers. The conversion leads to a linear dsDNA copy of the retrotransposon that includes long terminal repeats (LTRs) at both ends. Integrase (IN) targets the VLP to the nucleus, where a subparticle preintegration complex (PIC) containing at least integrase and the newly synthesized dsDNA copy of the retrotransposon must transit the nuclear membrane. Once in the nucleus, integrase performs the integration of the dsDNA into the host genome. The chain is Transposon Ty1-LR3 Gag-Pol polyprotein (TY1B-LR3) from Saccharomyces cerevisiae (strain ATCC 204508 / S288c) (Baker's yeast).